The chain runs to 705 residues: Elongation factor G 2 (705 aa).

The tr-type G domain occupies 8–290 (ELYRNIGISA…AVLDYLPSPL (283 aa)). GTP-binding positions include 17–24 (AHIDAGKT), 88–92 (DTPGH), and 142–145 (NKMD).

The protein belongs to the TRAFAC class translation factor GTPase superfamily. Classic translation factor GTPase family. EF-G/EF-2 subfamily.

The protein localises to the cytoplasm. In terms of biological role, catalyzes the GTP-dependent ribosomal translocation step during translation elongation. During this step, the ribosome changes from the pre-translocational (PRE) to the post-translocational (POST) state as the newly formed A-site-bound peptidyl-tRNA and P-site-bound deacylated tRNA move to the P and E sites, respectively. Catalyzes the coordinated movement of the two tRNA molecules, the mRNA and conformational changes in the ribosome. This chain is Elongation factor G 2, found in Bordetella avium (strain 197N).